Reading from the N-terminus, the 428-residue chain is tRNA modification GTPase MnmE (428 aa).

(6S)-5-formyl-5,6,7,8-tetrahydrofolate contacts are provided by R20, E77, and K117. The region spanning 213 to 351 (GFEVAIVGSP…LVSRISDTLR (139 aa)) is the TrmE-type G domain. Residues 223–228 (NVGKST), 242–248 (SEYAGTT), and 267–270 (DTAG) contribute to the GTP site. 2 residues coordinate Mg(2+): S227 and T248. Position 428 (K428) interacts with (6S)-5-formyl-5,6,7,8-tetrahydrofolate.

This sequence belongs to the TRAFAC class TrmE-Era-EngA-EngB-Septin-like GTPase superfamily. TrmE GTPase family. In terms of assembly, homodimer. Heterotetramer of two MnmE and two MnmG subunits. It depends on K(+) as a cofactor.

The protein localises to the cytoplasm. Exhibits a very high intrinsic GTPase hydrolysis rate. Involved in the addition of a carboxymethylaminomethyl (cmnm) group at the wobble position (U34) of certain tRNAs, forming tRNA-cmnm(5)s(2)U34. In Ruegeria sp. (strain TM1040) (Silicibacter sp.), this protein is tRNA modification GTPase MnmE.